The chain runs to 535 residues: Peptide chain release factor 3 (535 aa).

Residues 8–276 enclose the tr-type G domain; that stretch reads ARRRTFAIIS…ALVDLAPQPG (269 aa). GTP is bound by residues 17–24, 85–89, and 139–142; these read SHPDAGKT, DTPGH, and NKMD.

Belongs to the TRAFAC class translation factor GTPase superfamily. Classic translation factor GTPase family. PrfC subfamily.

The protein localises to the cytoplasm. Functionally, increases the formation of ribosomal termination complexes and stimulates activities of RF-1 and RF-2. It binds guanine nucleotides and has strong preference for UGA stop codons. It may interact directly with the ribosome. The stimulation of RF-1 and RF-2 is significantly reduced by GTP and GDP, but not by GMP. This chain is Peptide chain release factor 3, found in Bordetella avium (strain 197N).